A 144-amino-acid chain; its full sequence is Sec-independent protein translocase protein TatB (144 aa).

Residues 1–21 (MFEIGFWELVLVAIIGIVVVG) form a helical membrane-spanning segment. The segment at 97–144 (KMIDEPPYQEPPPAAHSVQTDAEAYRDTGIEPADKSSSPEHHHDDAAR) is disordered. Residues 119–144 (EAYRDTGIEPADKSSSPEHHHDDAAR) show a composition bias toward basic and acidic residues.

It belongs to the TatB family. In terms of assembly, the Tat system comprises two distinct complexes: a TatABC complex, containing multiple copies of TatA, TatB and TatC subunits, and a separate TatA complex, containing only TatA subunits. Substrates initially bind to the TatABC complex, which probably triggers association of the separate TatA complex to form the active translocon.

It is found in the cell inner membrane. In terms of biological role, part of the twin-arginine translocation (Tat) system that transports large folded proteins containing a characteristic twin-arginine motif in their signal peptide across membranes. Together with TatC, TatB is part of a receptor directly interacting with Tat signal peptides. TatB may form an oligomeric binding site that transiently accommodates folded Tat precursor proteins before their translocation. This is Sec-independent protein translocase protein TatB from Dichelobacter nodosus (strain VCS1703A).